Consider the following 902-residue polypeptide: Protein translocase subunit SecA (902 aa).

ATP is bound by residues glutamine 89, 107–111 (GEGKT), and aspartate 502. Cysteine 884, cysteine 886, cysteine 895, and histidine 896 together coordinate Zn(2+).

This sequence belongs to the SecA family. As to quaternary structure, monomer and homodimer. Part of the essential Sec protein translocation apparatus which comprises SecA, SecYEG and auxiliary proteins SecDF-YajC and YidC. Zn(2+) is required as a cofactor.

It localises to the cell inner membrane. Its subcellular location is the cytoplasm. The enzyme catalyses ATP + H2O + cellular proteinSide 1 = ADP + phosphate + cellular proteinSide 2.. Its function is as follows. Part of the Sec protein translocase complex. Interacts with the SecYEG preprotein conducting channel. Has a central role in coupling the hydrolysis of ATP to the transfer of proteins into and across the cell membrane, serving both as a receptor for the preprotein-SecB complex and as an ATP-driven molecular motor driving the stepwise translocation of polypeptide chains across the membrane. This is Protein translocase subunit SecA from Agrobacterium fabrum (strain C58 / ATCC 33970) (Agrobacterium tumefaciens (strain C58)).